The chain runs to 95 residues: UPF0512 protein H (95 aa).

It belongs to the UPF0512 family.

The sequence is that of UPF0512 protein H from Dictyostelium discoideum (Social amoeba).